Here is an 86-residue protein sequence, read N- to C-terminus: UPF0335 protein BruAb1_1737 (86 aa).

This sequence belongs to the UPF0335 family.

The protein is UPF0335 protein BruAb1_1737 of Brucella abortus biovar 1 (strain 9-941).